The chain runs to 410 residues: Bifunctional enzyme IspD/IspF (410 aa).

The interval 1–257 (MSHDPVVPSA…AGAGSASSRL (257 aa)) is 2-C-methyl-D-erythritol 4-phosphate cytidylyltransferase. Residues 258–410 (RSGIGTDVHA…AVATALVERL (153 aa)) form a 2-C-methyl-D-erythritol 2,4-cyclodiphosphate synthase region. Residues Asp264 and His266 each coordinate a divalent metal cation. Residues 264–266 (DVH) and 290–291 (HS) contribute to the 4-CDP-2-C-methyl-D-erythritol 2-phosphate site. His298 contacts a divalent metal cation. Residues 312–314 (DIG), 385–388 (TTTD), Phe392, and Arg395 contribute to the 4-CDP-2-C-methyl-D-erythritol 2-phosphate site.

It in the N-terminal section; belongs to the IspD/TarI cytidylyltransferase family. IspD subfamily. This sequence in the C-terminal section; belongs to the IspF family. A divalent metal cation serves as cofactor.

It carries out the reaction 2-C-methyl-D-erythritol 4-phosphate + CTP + H(+) = 4-CDP-2-C-methyl-D-erythritol + diphosphate. It catalyses the reaction 4-CDP-2-C-methyl-D-erythritol 2-phosphate = 2-C-methyl-D-erythritol 2,4-cyclic diphosphate + CMP. Its pathway is isoprenoid biosynthesis; isopentenyl diphosphate biosynthesis via DXP pathway; isopentenyl diphosphate from 1-deoxy-D-xylulose 5-phosphate: step 2/6. The protein operates within isoprenoid biosynthesis; isopentenyl diphosphate biosynthesis via DXP pathway; isopentenyl diphosphate from 1-deoxy-D-xylulose 5-phosphate: step 4/6. Bifunctional enzyme that catalyzes the formation of 4-diphosphocytidyl-2-C-methyl-D-erythritol from CTP and 2-C-methyl-D-erythritol 4-phosphate (MEP) (IspD), and catalyzes the conversion of 4-diphosphocytidyl-2-C-methyl-D-erythritol 2-phosphate (CDP-ME2P) to 2-C-methyl-D-erythritol 2,4-cyclodiphosphate (ME-CPP) with a corresponding release of cytidine 5-monophosphate (CMP) (IspF). The chain is Bifunctional enzyme IspD/IspF from Clavibacter michiganensis subsp. michiganensis (strain NCPPB 382).